A 272-amino-acid polypeptide reads, in one-letter code: Probable proteasome subunit alpha type-6 (272 aa).

Residues alanine 243–alanine 261 show a composition bias toward low complexity. Positions alanine 243–aspartate 272 are disordered.

This sequence belongs to the peptidase T1A family. The 26S proteasome consists of a 20S proteasome core and two 19S regulatory subunits. The 20S proteasome core is composed of 28 subunits that are arranged in four stacked rings, resulting in a barrel-shaped structure. The two end rings are each formed by seven alpha subunits, and the two central rings are each formed by seven beta subunits. The catalytic chamber with the active sites is on the inside of the barrel.

It localises to the cytoplasm. Its subcellular location is the nucleus. Its function is as follows. The proteasome is a multicatalytic proteinase complex which is characterized by its ability to cleave peptides with Arg, Phe, Tyr, Leu, and Glu adjacent to the leaving group at neutral or slightly basic pH. The proteasome has an ATP-dependent proteolytic activity. The chain is Probable proteasome subunit alpha type-6 from Schizosaccharomyces pombe (strain 972 / ATCC 24843) (Fission yeast).